Consider the following 459-residue polypeptide: tRNA modification GTPase MnmE (459 aa).

The (6S)-5-formyl-5,6,7,8-tetrahydrofolate site is built by Arg-22, Glu-85, and Arg-124. One can recognise a TrmE-type G domain in the interval 221 to 380 (GLSTVIVGKP…LEIQIRDLFF (160 aa)). Asn-231 serves as a coordination point for K(+). GTP is bound by residues 231–236 (NVGKSS), 250–256 (TEVAGTT), and 275–278 (DTAG). Position 235 (Ser-235) interacts with Mg(2+). Thr-250, Val-252, and Thr-255 together coordinate K(+). Position 256 (Thr-256) interacts with Mg(2+). Lys-459 lines the (6S)-5-formyl-5,6,7,8-tetrahydrofolate pocket.

Belongs to the TRAFAC class TrmE-Era-EngA-EngB-Septin-like GTPase superfamily. TrmE GTPase family. Homodimer. Heterotetramer of two MnmE and two MnmG subunits. The cofactor is K(+).

Its subcellular location is the cytoplasm. Its function is as follows. Exhibits a very high intrinsic GTPase hydrolysis rate. Involved in the addition of a carboxymethylaminomethyl (cmnm) group at the wobble position (U34) of certain tRNAs, forming tRNA-cmnm(5)s(2)U34. The chain is tRNA modification GTPase MnmE from Staphylococcus aureus (strain bovine RF122 / ET3-1).